Reading from the N-terminus, the 82-residue chain is Small ribosomal subunit protein eS27B (82 aa).

The C4-type zinc-finger motif lies at 37–59 (CPGCLNITTVFSHAQTAVTCESC).

It belongs to the eukaryotic ribosomal protein eS27 family. As to quaternary structure, component of the small ribosomal subunit (SSU). Mature yeast ribosomes consist of a small (40S) and a large (60S) subunit. The 40S small subunit contains 1 molecule of ribosomal RNA (18S rRNA) and 33 different proteins (encoded by 57 genes). The large 60S subunit contains 3 rRNA molecules (25S, 5.8S and 5S rRNA) and 46 different proteins (encoded by 81 genes). It depends on Zn(2+) as a cofactor. In terms of processing, the N-terminus is not modified.

The protein localises to the cytoplasm. Its function is as follows. Component of the ribosome, a large ribonucleoprotein complex responsible for the synthesis of proteins in the cell. The small ribosomal subunit (SSU) binds messenger RNAs (mRNAs) and translates the encoded message by selecting cognate aminoacyl-transfer RNA (tRNA) molecules. The large subunit (LSU) contains the ribosomal catalytic site termed the peptidyl transferase center (PTC), which catalyzes the formation of peptide bonds, thereby polymerizing the amino acids delivered by tRNAs into a polypeptide chain. The nascent polypeptides leave the ribosome through a tunnel in the LSU and interact with protein factors that function in enzymatic processing, targeting, and the membrane insertion of nascent chains at the exit of the ribosomal tunnel. This is Small ribosomal subunit protein eS27B from Saccharomyces cerevisiae (strain ATCC 204508 / S288c) (Baker's yeast).